Reading from the N-terminus, the 63-residue chain is MAVCQICGKKTVFGNTVAHSATTERRTWKPNLRRVRVVLEDGSTKRIYVCAKCLKAGKVKKAV.

This sequence belongs to the bacterial ribosomal protein bL28 family.

The protein is Large ribosomal subunit protein bL28 of Sulfurihydrogenibium sp. (strain YO3AOP1).